Consider the following 1178-residue polypeptide: DNA-directed RNA polymerase subunit beta' (1178 aa).

Residues Cys-60, Cys-62, Cys-75, and Cys-78 each contribute to the Zn(2+) site. Mg(2+)-binding residues include Asp-450, Asp-452, and Asp-454. Zn(2+)-binding residues include Cys-795, Cys-869, Cys-876, and Cys-879.

It belongs to the RNA polymerase beta' chain family. In terms of assembly, the RNAP catalytic core consists of 2 alpha, 1 beta, 1 beta' and 1 omega subunit. When a sigma factor is associated with the core the holoenzyme is formed, which can initiate transcription. Requires Mg(2+) as cofactor. Zn(2+) serves as cofactor.

The enzyme catalyses RNA(n) + a ribonucleoside 5'-triphosphate = RNA(n+1) + diphosphate. DNA-dependent RNA polymerase catalyzes the transcription of DNA into RNA using the four ribonucleoside triphosphates as substrates. This is DNA-directed RNA polymerase subunit beta' from Clostridium botulinum (strain Langeland / NCTC 10281 / Type F).